A 218-amino-acid polypeptide reads, in one-letter code: dTTP/UTP pyrophosphatase (218 aa).

D69 serves as the catalytic Proton acceptor.

It belongs to the Maf family. YhdE subfamily. A divalent metal cation is required as a cofactor.

Its subcellular location is the cytoplasm. It catalyses the reaction dTTP + H2O = dTMP + diphosphate + H(+). The enzyme catalyses UTP + H2O = UMP + diphosphate + H(+). In terms of biological role, nucleoside triphosphate pyrophosphatase that hydrolyzes dTTP and UTP. May have a dual role in cell division arrest and in preventing the incorporation of modified nucleotides into cellular nucleic acids. In Thermomicrobium roseum (strain ATCC 27502 / DSM 5159 / P-2), this protein is dTTP/UTP pyrophosphatase.